Consider the following 1020-residue polypeptide: DNA-directed RNA polymerase 2, chloroplastic/mitochondrial (1020 aa).

The interval 314–336 is disordered; sequence KKQKAEKDKQKEDGEHVTQEQEK. Catalysis depends on residues Asp-721, Lys-796, and Asp-953.

Belongs to the phage and mitochondrial RNA polymerase family. As to expression, the highest levels of expression are detected in the mature leaves. The level of expression is lowest in the cotyledons.

The protein localises to the plastid. It localises to the chloroplast. It is found in the mitochondrion. The catalysed reaction is RNA(n) + a ribonucleoside 5'-triphosphate = RNA(n+1) + diphosphate. DNA-dependent RNA polymerase catalyzes the transcription of DNA into RNA using the four ribonucleoside triphosphates as substrates. The protein is DNA-directed RNA polymerase 2, chloroplastic/mitochondrial (RPOT2) of Nicotiana sylvestris (Wood tobacco).